Reading from the N-terminus, the 604-residue chain is Glucose oxidase (604 aa).

The signal sequence occupies residues 1-18; sequence MKSTIITSILFSVATVQA. Residues Leu52, Thr53, and Glu73 each contribute to the FAD site. Residue Asn111 is glycosylated (N-linked (GlcNAc...) asparagine). FAD-binding residues include Ser125, Asn129, Gly130, and Ser132. Cys186 and Cys228 are oxidised to a cystine. Asn213 carries an N-linked (GlcNAc...) asparagine glycan. Position 272 (Val272) interacts with FAD. N-linked (GlcNAc...) asparagine glycans are attached at residues Asn278, Asn409, and Asn531. The active-site Proton acceptor is His537. Positions 558 and 559 each coordinate O2. 2 residues coordinate FAD: Gly570 and Met582.

This sequence belongs to the GMC oxidoreductase family. As to quaternary structure, homodimer. It depends on FAD as a cofactor.

Its subcellular location is the secreted. It is found in the cell wall. It localises to the cytoplasm. The protein resides in the extracellular space. The protein localises to the extracellular matrix. The enzyme catalyses beta-D-glucose + O2 = D-glucono-1,5-lactone + H2O2. Functionally, glucose oxidase catalyzes the oxidation of beta-D-glucose to D-glucono-delta-lactone and hydrogen peroxide in the presence of molecular oxygen. The enzyme also catalyzes the reaction with D-xylose but at a much lower rate. Shows any activities against D-fructose, D-galactose and D-arabinose. The enzyme is cytotoxic for a series of bacteria, yeasts and filamentous fungi and acts primarily via the liberation of H(2)O(2), which is a harmful oxidative stress-generating agent. The protein is Glucose oxidase of Penicillium chrysogenum (Penicillium notatum).